A 352-amino-acid chain; its full sequence is Protein RecA (352 aa).

Position 68–75 (68–75 (GPESSGKT)) interacts with ATP.

Belongs to the RecA family.

It localises to the cytoplasm. In terms of biological role, can catalyze the hydrolysis of ATP in the presence of single-stranded DNA, the ATP-dependent uptake of single-stranded DNA by duplex DNA, and the ATP-dependent hybridization of homologous single-stranded DNAs. It interacts with LexA causing its activation and leading to its autocatalytic cleavage. This is Protein RecA from Clostridium perfringens (strain SM101 / Type A).